The following is a 332-amino-acid chain: Terpene synthase 1 (332 aa).

The DDxx(x)D/E motif signature appears at 81–86 (DDGLDA). The short motif at 221-229 (NDLVSYEKE) is the NDxxSxxxD/E motif element.

It belongs to the terpene synthase family.

It catalyses the reaction (2E,6E)-farnesyl diphosphate = (2S,3R,6S,9S)-(-)-protoillud-7-ene + diphosphate. Its function is as follows. Terpene synthase that converts its substrate farnesyl diphosphate (FPP) into the sesquiterpene protoillud-7-ene. The polypeptide is Terpene synthase 1 (Acytostelium subglobosum (Slime mold)).